A 232-amino-acid polypeptide reads, in one-letter code: 7-cyano-7-deazaguanine synthase 2 (232 aa).

9–19 contacts ATP; it reads FSGGQDSTTCL. Residues Cys189, Cys198, Cys201, and Cys204 each coordinate Zn(2+).

It belongs to the QueC family. Requires Zn(2+) as cofactor.

It catalyses the reaction 7-carboxy-7-deazaguanine + NH4(+) + ATP = 7-cyano-7-deazaguanine + ADP + phosphate + H2O + H(+). The protein operates within purine metabolism; 7-cyano-7-deazaguanine biosynthesis. Catalyzes the ATP-dependent conversion of 7-carboxy-7-deazaguanine (CDG) to 7-cyano-7-deazaguanine (preQ(0)). This chain is 7-cyano-7-deazaguanine synthase 2, found in Pseudomonas fluorescens (strain ATCC BAA-477 / NRRL B-23932 / Pf-5).